We begin with the raw amino-acid sequence, 473 residues long: Inactive pancreatic lipase-related protein 1 (473 aa).

Positions 1–17 (MLILWTIPLFLLGAAQG) are cleaved as a signal peptide. Intrachain disulfides connect cysteine 21/cysteine 27 and cysteine 109/cysteine 120. Residue serine 171 is the Nucleophile of the active site. The Charge relay system role is filled by aspartate 194. The Ca(2+) site is built by glutamate 205, arginine 208, aspartate 210, and aspartate 213. A disulfide bridge connects residues cysteine 255 and cysteine 279. The active-site Charge relay system is histidine 281. 3 disulfides stabilise this stretch: cysteine 303/cysteine 314, cysteine 317/cysteine 322, and cysteine 451/cysteine 467. Positions 356 to 467 (WRYRVSLTFS…EDILLTLLPC (112 aa)) constitute a PLAT domain.

It belongs to the AB hydrolase superfamily. Lipase family. In terms of tissue distribution, expressed in female, but not in male, lacrimal gland. Expressed in male and female sublingual gland and pancreas.

The protein localises to the secreted. Its function is as follows. May function as inhibitor of dietary triglyceride digestion. Lacks detectable lipase activity (in vitro). This chain is Inactive pancreatic lipase-related protein 1 (Pnliprp1), found in Mus musculus (Mouse).